The sequence spans 113 residues: MNTLDFVDQSSLRDDIPAFGPGDTVNVHVKVIEGSKERIQVFKGVVIRRQGGGIRETFTVRKESYGVGVERTFPVHSPNIDHIDVVTRGDVRRAKLYYLRELRGKKAKIKEKR.

This sequence belongs to the bacterial ribosomal protein bL19 family.

Its function is as follows. This protein is located at the 30S-50S ribosomal subunit interface and may play a role in the structure and function of the aminoacyl-tRNA binding site. This Mycobacterium sp. (strain JLS) protein is Large ribosomal subunit protein bL19.